Here is a 209-residue protein sequence, read N- to C-terminus: Max dimerization protein 4 (209 aa).

Residues 6 to 23 (LLILLEAAEYLERRDREA) form an interaction with SIN3A and SIN3B region. The region spanning 53-105 (NNRSSHNELEKHRRAKLRLYLEQLKQLVPLGPDSTRHTTLSLLKRAKVHIKKL) is the bHLH domain. Residues 140-209 (RVRTDSTGSA…CRRLGRPALS (70 aa)) are disordered. The segment covering 153-163 (DDSEQEVDIEG) has biased composition (acidic residues). A compositionally biased stretch (basic residues) spans 199–209 (HCRRLGRPALS).

In terms of assembly, efficient DNA binding requires dimerization with another bHLH protein. Binds DNA as a heterodimer with MAX. Interacts with SIN3A AND SIN3B. Interacts with RNF17.

Its subcellular location is the nucleus. Its function is as follows. Transcriptional repressor. Binds with MAX to form a sequence-specific DNA-binding protein complex which recognizes the core sequence 5'-CAC[GA]TG-3'. Antagonizes MYC transcriptional activity by competing for MAX and suppresses MYC dependent cell transformation. The sequence is that of Max dimerization protein 4 (MXD4) from Homo sapiens (Human).